A 397-amino-acid chain; its full sequence is 2-deoxy-scyllo-inosose synthase (397 aa).

Residues Asp41, 71 to 74 (EPYK), 103 to 107 (GVIGN), 127 to 128 (TS), 138 to 140 (SLK), and 149 to 150 (KN) each bind NAD(+). Lys140 is an active-site residue. Glu182 lines the Co(2+) pocket. Glu242 is an active-site residue. Positions 245 and 261 each coordinate Co(2+).

The protein belongs to the sugar phosphate cyclases superfamily. DOI synthase family. NAD(+) is required as a cofactor. It depends on Co(2+) as a cofactor.

It catalyses the reaction D-glucose 6-phosphate = 2-deoxy-L-scyllo-inosose + phosphate. It functions in the pathway metabolic intermediate biosynthesis; 2-deoxystreptamine biosynthesis; 2-deoxystreptamine from D-glucose 6-phosphate: step 1/4. It participates in antibiotic biosynthesis; gentamicin biosynthesis. Its function is as follows. Catalyzes the intramolecular carbocycle formation from D-glucose-6-phosphate to 2-deoxy-scyllo-inosose (DOI). The protein is 2-deoxy-scyllo-inosose synthase (gtmA) of Micromonospora echinospora (Micromonospora purpurea).